The chain runs to 302 residues: Sulfate adenylyltransferase subunit 2 (302 aa).

This sequence belongs to the PAPS reductase family. CysD subfamily. In terms of assembly, heterodimer composed of CysD, the smaller subunit, and CysN.

The enzyme catalyses sulfate + ATP + H(+) = adenosine 5'-phosphosulfate + diphosphate. It participates in sulfur metabolism; hydrogen sulfide biosynthesis; sulfite from sulfate: step 1/3. In terms of biological role, with CysN forms the ATP sulfurylase (ATPS) that catalyzes the adenylation of sulfate producing adenosine 5'-phosphosulfate (APS) and diphosphate, the first enzymatic step in sulfur assimilation pathway. APS synthesis involves the formation of a high-energy phosphoric-sulfuric acid anhydride bond driven by GTP hydrolysis by CysN coupled to ATP hydrolysis by CysD. This chain is Sulfate adenylyltransferase subunit 2, found in Escherichia coli O6:K15:H31 (strain 536 / UPEC).